Here is a 225-residue protein sequence, read N- to C-terminus: Uracil-DNA glycosylase (225 aa).

Asp65 (proton acceptor) is an active-site residue.

It belongs to the uracil-DNA glycosylase (UDG) superfamily. UNG family.

Its subcellular location is the cytoplasm. The catalysed reaction is Hydrolyzes single-stranded DNA or mismatched double-stranded DNA and polynucleotides, releasing free uracil.. Its function is as follows. Excises uracil residues from the DNA which can arise as a result of misincorporation of dUMP residues by DNA polymerase or due to deamination of cytosine. The chain is Uracil-DNA glycosylase from Bacillus cereus (strain ZK / E33L).